A 245-amino-acid chain; its full sequence is Uridylate kinase (245 aa).

Residue 15 to 18 (KLSG) participates in ATP binding. Residues 23 to 28 (GDEGFG) form an involved in allosteric activation by GTP region. UMP is bound at residue glycine 57. ATP-binding residues include glycine 58 and arginine 62. Residues aspartate 77 and 138–145 (TGNPFCTT) contribute to the UMP site. Threonine 165, tyrosine 171, and aspartate 174 together coordinate ATP.

This sequence belongs to the UMP kinase family. As to quaternary structure, homohexamer.

The protein localises to the cytoplasm. The enzyme catalyses UMP + ATP = UDP + ADP. It functions in the pathway pyrimidine metabolism; CTP biosynthesis via de novo pathway; UDP from UMP (UMPK route): step 1/1. Allosterically activated by GTP. Inhibited by UTP. Functionally, catalyzes the reversible phosphorylation of UMP to UDP. This Shewanella sp. (strain W3-18-1) protein is Uridylate kinase.